We begin with the raw amino-acid sequence, 266 residues long: Putative carbamate hydrolase RutD (266 aa).

It belongs to the AB hydrolase superfamily. Hydrolase RutD family.

It catalyses the reaction carbamate + 2 H(+) = NH4(+) + CO2. In terms of biological role, involved in pyrimidine catabolism. May facilitate the hydrolysis of carbamate, a reaction that can also occur spontaneously. The chain is Putative carbamate hydrolase RutD from Escherichia coli O150:H5 (strain SE15).